Here is a 631-residue protein sequence, read N- to C-terminus: Phosphomethylpyrimidine synthase (631 aa).

Residues Asn-239, Met-268, Tyr-297, His-333, 353 to 355 (SRG), 394 to 397 (DGLR), and Glu-433 each bind substrate. Residue His-437 participates in Zn(2+) binding. Substrate is bound at residue Tyr-460. His-501 contributes to the Zn(2+) binding site. 3 residues coordinate [4Fe-4S] cluster: Cys-581, Cys-584, and Cys-589.

Belongs to the ThiC family. In terms of assembly, homodimer. [4Fe-4S] cluster serves as cofactor.

The enzyme catalyses 5-amino-1-(5-phospho-beta-D-ribosyl)imidazole + S-adenosyl-L-methionine = 4-amino-2-methyl-5-(phosphooxymethyl)pyrimidine + CO + 5'-deoxyadenosine + formate + L-methionine + 3 H(+). It functions in the pathway cofactor biosynthesis; thiamine diphosphate biosynthesis. Its function is as follows. Catalyzes the synthesis of the hydroxymethylpyrimidine phosphate (HMP-P) moiety of thiamine from aminoimidazole ribotide (AIR) in a radical S-adenosyl-L-methionine (SAM)-dependent reaction. The chain is Phosphomethylpyrimidine synthase from Escherichia coli O81 (strain ED1a).